Consider the following 523-residue polypeptide: 2-isopropylmalate synthase (523 aa).

The Pyruvate carboxyltransferase domain occupies 5-267 (VIIFDTTLRD…HTAINHQEIW (263 aa)). The Mn(2+) site is built by Asp14, His202, His204, and Asn238. A regulatory domain region spans residues 392 to 523 (RLDYFSVQSG…QHNENNKETV (132 aa)).

Belongs to the alpha-IPM synthase/homocitrate synthase family. LeuA type 1 subfamily. Homodimer. Mn(2+) serves as cofactor.

The protein resides in the cytoplasm. The enzyme catalyses 3-methyl-2-oxobutanoate + acetyl-CoA + H2O = (2S)-2-isopropylmalate + CoA + H(+). Its pathway is amino-acid biosynthesis; L-leucine biosynthesis; L-leucine from 3-methyl-2-oxobutanoate: step 1/4. Functionally, catalyzes the condensation of the acetyl group of acetyl-CoA with 3-methyl-2-oxobutanoate (2-ketoisovalerate) to form 3-carboxy-3-hydroxy-4-methylpentanoate (2-isopropylmalate). The protein is 2-isopropylmalate synthase of Escherichia coli (strain K12 / MC4100 / BW2952).